The following is a 266-amino-acid chain: Putative carbamate hydrolase RutD (266 aa).

It belongs to the AB hydrolase superfamily. Hydrolase RutD family.

The catalysed reaction is carbamate + 2 H(+) = NH4(+) + CO2. Involved in pyrimidine catabolism. May facilitate the hydrolysis of carbamate, a reaction that can also occur spontaneously. This Escherichia coli O111:H- (strain 11128 / EHEC) protein is Putative carbamate hydrolase RutD.